The primary structure comprises 370 residues: MKFIDEARIEVIAGDGGDGSASMRREKFVPFGGPDGGDGGRGGNVYAIADRNINTLIDYRYAKKHMARNGENGRGSDCYGKGGDDITLRMPVGTVVTDMDTGELIADLTEHDQQVMLAKGGSGGLGNLHFKSSTNRAPRQKTDGKPGERRMLRLELKVLADVGLLGMPNAGKSTFISSVSNAKPKIADYPFTTLAPNLGVVRVGPSKSFVIADIPGLIEGAAEGAGLGHQFLRHLQRTGVLLHLVDLAPFDESVDPVAEAKAIVGELRKYDEALYEKPRWLVLNKLDMVPEDERDARVADFLERFGWDGPVFQISALTGQGCEALCYAIYDYLAEHSDAHRAAEEEDLAADVRFRDAPPSDGGATSGGDA.

Positions 1-159 (MKFIDEARIE…RMLRLELKVL (159 aa)) constitute an Obg domain. The segment at 127–146 (NLHFKSSTNRAPRQKTDGKP) is disordered. One can recognise an OBG-type G domain in the interval 160 to 334 (ADVGLLGMPN…LCYAIYDYLA (175 aa)). GTP contacts are provided by residues 166–173 (GMPNAGKS), 191–195 (FTTLA), 213–216 (DIPG), 284–287 (NKLD), and 315–317 (SAL). Residues Ser173 and Thr193 each coordinate Mg(2+). Positions 350–370 (ADVRFRDAPPSDGGATSGGDA) are disordered.

It belongs to the TRAFAC class OBG-HflX-like GTPase superfamily. OBG GTPase family. As to quaternary structure, monomer. The cofactor is Mg(2+).

It localises to the cytoplasm. In terms of biological role, an essential GTPase which binds GTP, GDP and possibly (p)ppGpp with moderate affinity, with high nucleotide exchange rates and a fairly low GTP hydrolysis rate. Plays a role in control of the cell cycle, stress response, ribosome biogenesis and in those bacteria that undergo differentiation, in morphogenesis control. The polypeptide is GTPase Obg (Burkholderia vietnamiensis (strain G4 / LMG 22486) (Burkholderia cepacia (strain R1808))).